The following is a 56-amino-acid chain: Large ribosomal subunit protein bL33 (56 aa).

The protein belongs to the bacterial ribosomal protein bL33 family.

This chain is Large ribosomal subunit protein bL33, found in Rickettsia bellii (strain OSU 85-389).